Here is a 444-residue protein sequence, read N- to C-terminus: tRNA-2-methylthio-N(6)-dimethylallyladenosine synthase (444 aa).

Residues 6–124 (KTFKIITYGC…LPQLIEEIKA (119 aa)) form the MTTase N-terminal domain. Cysteine 15, cysteine 51, cysteine 85, cysteine 161, cysteine 165, and cysteine 168 together coordinate [4Fe-4S] cluster. One can recognise a Radical SAM core domain in the interval 147-377 (RARGAQAFVT…MELQNSISLA (231 aa)). The region spanning 380–443 (EALVGQEVEV…TWLLKGEMVD (64 aa)) is the TRAM domain.

Belongs to the methylthiotransferase family. MiaB subfamily. Monomer. The cofactor is [4Fe-4S] cluster.

It localises to the cytoplasm. The catalysed reaction is N(6)-dimethylallyladenosine(37) in tRNA + (sulfur carrier)-SH + AH2 + 2 S-adenosyl-L-methionine = 2-methylsulfanyl-N(6)-dimethylallyladenosine(37) in tRNA + (sulfur carrier)-H + 5'-deoxyadenosine + L-methionine + A + S-adenosyl-L-homocysteine + 2 H(+). Its function is as follows. Catalyzes the methylthiolation of N6-(dimethylallyl)adenosine (i(6)A), leading to the formation of 2-methylthio-N6-(dimethylallyl)adenosine (ms(2)i(6)A) at position 37 in tRNAs that read codons beginning with uridine. The sequence is that of tRNA-2-methylthio-N(6)-dimethylallyladenosine synthase from Moorella thermoacetica (strain ATCC 39073 / JCM 9320).